The sequence spans 518 residues: Protein nucleotidyltransferase YdiU (518 aa).

The ATP site is built by Gly109, Gly111, Arg112, Lys131, Asp143, Gly144, Arg194, and Arg201. The active-site Proton acceptor is Asp270. 2 residues coordinate Mg(2+): Asn271 and Asp280. Residue Asp280 participates in ATP binding.

It belongs to the SELO family. Mg(2+) serves as cofactor. Requires Mn(2+) as cofactor.

It catalyses the reaction L-seryl-[protein] + ATP = 3-O-(5'-adenylyl)-L-seryl-[protein] + diphosphate. It carries out the reaction L-threonyl-[protein] + ATP = 3-O-(5'-adenylyl)-L-threonyl-[protein] + diphosphate. The enzyme catalyses L-tyrosyl-[protein] + ATP = O-(5'-adenylyl)-L-tyrosyl-[protein] + diphosphate. The catalysed reaction is L-histidyl-[protein] + UTP = N(tele)-(5'-uridylyl)-L-histidyl-[protein] + diphosphate. It catalyses the reaction L-seryl-[protein] + UTP = O-(5'-uridylyl)-L-seryl-[protein] + diphosphate. It carries out the reaction L-tyrosyl-[protein] + UTP = O-(5'-uridylyl)-L-tyrosyl-[protein] + diphosphate. Functionally, nucleotidyltransferase involved in the post-translational modification of proteins. It can catalyze the addition of adenosine monophosphate (AMP) or uridine monophosphate (UMP) to a protein, resulting in modifications known as AMPylation and UMPylation. The sequence is that of Protein nucleotidyltransferase YdiU from Paraburkholderia xenovorans (strain LB400).